A 599-amino-acid polypeptide reads, in one-letter code: Beta-myrcene synthase, chloroplastic (599 aa).

Residues 1–34 (MWSTISISMNVAILKKPLNFLHNSNNKASNPRCV) constitute a chloroplast transit peptide. Mg(2+) is bound by residues aspartate 352, aspartate 356, aspartate 496, threonine 500, and glutamate 504. A DDXXD motif motif is present at residues 352–356 (DDVYD).

The protein belongs to the terpene synthase family. Mg(2+) is required as a cofactor. Requires Mn(2+) as cofactor.

Its subcellular location is the plastid. The protein resides in the chloroplast. It carries out the reaction (2E)-geranyl diphosphate = beta-myrcene + diphosphate. It participates in secondary metabolite biosynthesis; terpenoid biosynthesis. Functionally, monoterpene synthase that catalyzes the formation of beta-myrcene from geranyl diphosphate. This chain is Beta-myrcene synthase, chloroplastic (MYS), found in Ocimum basilicum (Sweet basil).